The sequence spans 292 residues: tRNA-cytidine(32) 2-sulfurtransferase (292 aa).

The short motif at 53 to 58 (SGGKDS) is the PP-loop motif element. [4Fe-4S] cluster is bound by residues Cys128, Cys131, and Cys219.

The protein belongs to the TtcA family. In terms of assembly, homodimer. Requires Mg(2+) as cofactor. It depends on [4Fe-4S] cluster as a cofactor.

It localises to the cytoplasm. It catalyses the reaction cytidine(32) in tRNA + S-sulfanyl-L-cysteinyl-[cysteine desulfurase] + AH2 + ATP = 2-thiocytidine(32) in tRNA + L-cysteinyl-[cysteine desulfurase] + A + AMP + diphosphate + H(+). It participates in tRNA modification. Functionally, catalyzes the ATP-dependent 2-thiolation of cytidine in position 32 of tRNA, to form 2-thiocytidine (s(2)C32). The sulfur atoms are provided by the cysteine/cysteine desulfurase (IscS) system. The protein is tRNA-cytidine(32) 2-sulfurtransferase of Cereibacter sphaeroides (strain ATCC 17029 / ATH 2.4.9) (Rhodobacter sphaeroides).